A 557-amino-acid polypeptide reads, in one-letter code: DNA mismatch repair protein MutL (557 aa).

The protein belongs to the DNA mismatch repair MutL/HexB family.

In terms of biological role, this protein is involved in the repair of mismatches in DNA. It is required for dam-dependent methyl-directed DNA mismatch repair. May act as a 'molecular matchmaker', a protein that promotes the formation of a stable complex between two or more DNA-binding proteins in an ATP-dependent manner without itself being part of a final effector complex. This is DNA mismatch repair protein MutL from Methanothrix thermoacetophila (strain DSM 6194 / JCM 14653 / NBRC 101360 / PT) (Methanosaeta thermophila).